The chain runs to 305 residues: Tyrosine recombinase XerC (305 aa).

The Core-binding (CB) domain occupies T4–E95. Residues L116–T298 enclose the Tyr recombinase domain. Active-site residues include R159, K182, H250, R253, and H276. The active-site O-(3'-phospho-DNA)-tyrosine intermediate is the Y285.

Belongs to the 'phage' integrase family. XerC subfamily. As to quaternary structure, forms a cyclic heterotetrameric complex composed of two molecules of XerC and two molecules of XerD.

It is found in the cytoplasm. Its function is as follows. Site-specific tyrosine recombinase, which acts by catalyzing the cutting and rejoining of the recombining DNA molecules. The XerC-XerD complex is essential to convert dimers of the bacterial chromosome into monomers to permit their segregation at cell division. It also contributes to the segregational stability of plasmids. In Rickettsia rickettsii (strain Iowa), this protein is Tyrosine recombinase XerC.